The following is a 57-amino-acid chain: Small ribosomal subunit protein bS21 (57 aa).

Belongs to the bacterial ribosomal protein bS21 family.

In Lysinibacillus sphaericus (strain C3-41), this protein is Small ribosomal subunit protein bS21.